We begin with the raw amino-acid sequence, 332 residues long: MAYAAFRSIGAYVPSKILSNEDLSKMVDTTDEWITKRTGIKERHIAADGEFTSDMGAKAAQIAIERSGIEKNKIDMIVCATISPDYFCMPSTATIISTKLGLENVTAFDISAACTGFVYILSIAKAFIESGMKKNVLIIGAEKLSSITDYTDRGTCILFGDGAGAAIISATDDKSEAIIDIHTGADGEFADLLMSPNGGSGSIHDTLDQEAKSCFMQMKGNETFKVAVKTLTKDVIEILQDNNIESSEIKHFVPHQANLRIIKAVGDALKLNDEQVVLTVEKFGNTSGASIPMAINDIYESGKLKAGELMLLDAFGGGLTWGSALVPFSPLK.

Active-site residues include C114 and H255. Positions 256–260 (QANLR) are ACP-binding. N285 is an active-site residue.

The protein belongs to the thiolase-like superfamily. FabH family. In terms of assembly, homodimer.

It is found in the cytoplasm. It catalyses the reaction malonyl-[ACP] + acetyl-CoA + H(+) = 3-oxobutanoyl-[ACP] + CO2 + CoA. The protein operates within lipid metabolism; fatty acid biosynthesis. In terms of biological role, catalyzes the condensation reaction of fatty acid synthesis by the addition to an acyl acceptor of two carbons from malonyl-ACP. Catalyzes the first condensation reaction which initiates fatty acid synthesis and may therefore play a role in governing the total rate of fatty acid production. Possesses both acetoacetyl-ACP synthase and acetyl transacylase activities. Its substrate specificity determines the biosynthesis of branched-chain and/or straight-chain of fatty acids. The protein is Beta-ketoacyl-[acyl-carrier-protein] synthase III of Sulfurimonas denitrificans (strain ATCC 33889 / DSM 1251) (Thiomicrospira denitrificans (strain ATCC 33889 / DSM 1251)).